A 278-amino-acid polypeptide reads, in one-letter code: Pantothenate synthetase (278 aa).

An ATP-binding site is contributed by 26–33 (MGNLHEGH). Residue histidine 33 is the Proton donor of the active site. (R)-pantoate is bound at residue glutamine 57. Glutamine 57 serves as a coordination point for beta-alanine. 144 to 147 (GKKD) is an ATP binding site. Glutamine 150 contributes to the (R)-pantoate binding site. ATP-binding positions include glycine 173 and 181-184 (LSSR).

It belongs to the pantothenate synthetase family. Homodimer.

Its subcellular location is the cytoplasm. It catalyses the reaction (R)-pantoate + beta-alanine + ATP = (R)-pantothenate + AMP + diphosphate + H(+). The protein operates within cofactor biosynthesis; (R)-pantothenate biosynthesis; (R)-pantothenate from (R)-pantoate and beta-alanine: step 1/1. Catalyzes the condensation of pantoate with beta-alanine in an ATP-dependent reaction via a pantoyl-adenylate intermediate. The sequence is that of Pantothenate synthetase from Neisseria meningitidis serogroup B (strain ATCC BAA-335 / MC58).